The following is a 188-amino-acid chain: uncharacterized protein (188 aa).

Residues 1–23 form the signal peptide; it reads MFKGQKTLAALAVSLLFTAPVYA. C42 and C81 form a disulfide bridge.

This sequence belongs to the fimbrial protein family.

It is found in the fimbrium. This is an uncharacterized protein from Escherichia coli (strain K12).